A 58-amino-acid chain; its full sequence is uncharacterized protein (58 aa).

2 disordered regions span residues 1-20 (MKKNRHSRDMQNHKKPMNKK) and 38-58 (IIETLEVTKPEKKKEKNKKQQ).

This is an uncharacterized protein from Bacillus subtilis (strain 168).